Consider the following 248-residue polypeptide: Ubiquinone biosynthesis O-methyltransferase (248 aa).

Residues arginine 41, glycine 72, aspartate 93, and methionine 136 each coordinate S-adenosyl-L-methionine.

Belongs to the methyltransferase superfamily. UbiG/COQ3 family.

The enzyme catalyses a 3-demethylubiquinol + S-adenosyl-L-methionine = a ubiquinol + S-adenosyl-L-homocysteine + H(+). It carries out the reaction a 3-(all-trans-polyprenyl)benzene-1,2-diol + S-adenosyl-L-methionine = a 2-methoxy-6-(all-trans-polyprenyl)phenol + S-adenosyl-L-homocysteine + H(+). Its pathway is cofactor biosynthesis; ubiquinone biosynthesis. In terms of biological role, O-methyltransferase that catalyzes the 2 O-methylation steps in the ubiquinone biosynthetic pathway. In Brucella melitensis biotype 2 (strain ATCC 23457), this protein is Ubiquinone biosynthesis O-methyltransferase.